The sequence spans 1344 residues: Eukaryotic translation initiation factor 3 subunit A (1344 aa).

An N6-acetyllysine modification is found at K68. A coiled-coil region spans residues N82 to N120. One can recognise a PCI domain in the interval M315 to N498. S492 and S584 each carry phosphoserine. The segment at L664–A835 is interaction with EIF3B. Disordered regions lie at residues Y807–Y844, E866–D1240, and D1252–R1344. Basic and acidic residues-rich tracts occupy residues E866 to R1126, G1138 to D1240, D1252 to R1292, and S1300 to E1333. S895 is modified (phosphoserine). The 1; truncated repeat unit spans residues D924–R931. A 21 X 10 AA approximate tandem repeats of [DA]-[DE]-[ED]-R-[PLIGFSV]-[RPS]-[RW]-[RL]-[GNIHT]-[DGLPTAM] region spans residues D924–F1133. Repeat 2 spans residues D932–G941. A 3; approximate repeat occupies D942 to R951. S949 carries the post-translational modification Phosphoserine. A run of 17 repeats spans residues D953–L962, D963–P972, D973–T982, D983–A992, D993–G1002, D1003–T1012, D1013–L1022, D1023–A1032, D1033–M1042, D1043–G1052, D1054–A1063, D1064–M1073, D1074–L1083, D1084–A1093, A1094–A1103, D1104–M1113, and D1114–D1123. At S1028 the chain carries Phosphoserine. The 21; approximate repeat unit spans residues D1124 to F1133. A phosphoserine mark is found at S1149, S1159, and S1223. Phosphoserine is present on residues S1300 and S1326.

Belongs to the eIF-3 subunit A family. As to quaternary structure, interacts with KRT7. Component of the eukaryotic translation initiation factor 3 (eIF-3) complex, which is composed of 13 subunits: EIF3A, EIF3B, EIF3C, EIF3D, EIF3E, EIF3F, EIF3G, EIF3H, EIF3I, EIF3J, EIF3K, EIF3L and EIF3M. The eIF-3 complex appears to include 3 stable modules: module A is composed of EIF3A, EIF3B, EIF3G and EIF3I; module B is composed of EIF3F, EIF3H, and EIF3M; and module C is composed of EIF3C, EIF3D, EIF3E, EIF3L and EIF3K. EIF3C of module C binds EIF3B of module A and EIF3H of module B, thereby linking the three modules. EIF3J is a labile subunit that binds to the eIF-3 complex via EIF3B. The eIF-3 complex may interact with RPS6KB1 under conditions of nutrient depletion. Mitogenic stimulation may lead to binding and activation of a complex composed of MTOR and RPTOR, leading to phosphorylation and release of RPS6KB1 and binding of EIF4B to eIF-3. Interacts with EIF4G1 and PIWIL2. In terms of processing, phosphorylated. Phosphorylation is enhanced upon serum stimulation.

The protein localises to the cytoplasm. It localises to the cytoskeleton. The protein resides in the microtubule organizing center. Its subcellular location is the centrosome. It is found in the nucleus. Its function is as follows. RNA-binding component of the eukaryotic translation initiation factor 3 (eIF-3) complex, which is required for several steps in the initiation of protein synthesis. The eIF-3 complex associates with the 40S ribosome and facilitates the recruitment of eIF-1, eIF-1A, eIF-2:GTP:methionyl-tRNAi and eIF-5 to form the 43S pre-initiation complex (43S PIC). The eIF-3 complex stimulates mRNA recruitment to the 43S PIC and scanning of the mRNA for AUG recognition. The eIF-3 complex is also required for disassembly and recycling of post-termination ribosomal complexes and subsequently prevents premature joining of the 40S and 60S ribosomal subunits prior to initiation. The eIF-3 complex specifically targets and initiates translation of a subset of mRNAs involved in cell proliferation, including cell cycling, differentiation and apoptosis, and uses different modes of RNA stem-loop binding to exert either translational activation or repression. The chain is Eukaryotic translation initiation factor 3 subunit A (Eif3a) from Mus musculus (Mouse).